The chain runs to 126 residues: Glycine cleavage system H protein (126 aa).

Residues 22–104 (VATVGITEYA…YEKAWMVKIE (83 aa)) form the Lipoyl-binding domain. The residue at position 63 (K63) is an N6-lipoyllysine.

This sequence belongs to the GcvH family. The glycine cleavage system is composed of four proteins: P, T, L and H. (R)-lipoate serves as cofactor.

In terms of biological role, the glycine cleavage system catalyzes the degradation of glycine. The H protein shuttles the methylamine group of glycine from the P protein to the T protein. Its function is as follows. Is also involved in protein lipoylation via its role as an octanoyl/lipoyl carrier protein intermediate. In Staphylococcus epidermidis (strain ATCC 12228 / FDA PCI 1200), this protein is Glycine cleavage system H protein.